The sequence spans 367 residues: GMP synthase [glutamine-hydrolyzing] subunit B (367 aa).

Residues 2-190 (FDPASFVKEI…LKLPKEISER (189 aa)) form the GMPS ATP-PPase domain. An ATP-binding site is contributed by 29–35 (SGGVDST).

As to quaternary structure, heterodimer composed of a glutamine amidotransferase subunit (A) and a GMP-binding subunit (B).

It carries out the reaction XMP + L-glutamine + ATP + H2O = GMP + L-glutamate + AMP + diphosphate + 2 H(+). It functions in the pathway purine metabolism; GMP biosynthesis; GMP from XMP (L-Gln route): step 1/1. Functionally, catalyzes the synthesis of GMP from XMP. The protein is GMP synthase [glutamine-hydrolyzing] subunit B of Saccharolobus islandicus (strain M.16.27) (Sulfolobus islandicus).